The following is a 218-amino-acid chain: Cytochrome b6 (218 aa).

The chain crosses the membrane as a helical span at residues 35 to 55; the sequence is IFYCLGGITLVCFLIQFATGF. Cysteine 38 contributes to the heme c binding site. Heme b-binding residues include histidine 89 and histidine 103. The next 3 helical transmembrane spans lie at 93 to 113, 119 to 139, and 189 to 209; these read ASMM…TGGF, LTWV…VTGY, and LHTF…FLMI. Heme b contacts are provided by histidine 190 and histidine 205.

It belongs to the cytochrome b family. PetB subfamily. The 4 large subunits of the cytochrome b6-f complex are cytochrome b6, subunit IV (17 kDa polypeptide, PetD), cytochrome f and the Rieske protein, while the 4 small subunits are PetG, PetL, PetM and PetN. The complex functions as a dimer. It depends on heme b as a cofactor. Heme c is required as a cofactor.

The protein localises to the cellular thylakoid membrane. Component of the cytochrome b6-f complex, which mediates electron transfer between photosystem II (PSII) and photosystem I (PSI), cyclic electron flow around PSI, and state transitions. In Synechococcus sp. (strain CC9605), this protein is Cytochrome b6.